Here is a 781-residue protein sequence, read N- to C-terminus: MTPPPASPSKKAKSSWLLIALIAVIIGIILCAGVITFLTLFNKNGDGPDMDWQNATEVPLTTTSKATVSTTTTQSATTPSTTTTRIEETTTTTSGAFDESVKNSEASTSTIPTTEAVPTTTATDAPEIVMPVDVASILKDKTKDFEIVEKCAEIQALPVSCTPSQSPLTSDPSKFQPIHYVLNITIRDVRKPVLEGHMQLFASTKDQVQAISLHSVKIHNLENRDRIHVVNCNTGETICVSRVHQIDDLIHLELAQSISSGVNLRVDIDGFISADSGPHVFKQIPTAKWRVPQMIGSVFEPTSARHVFPSFDLHNQKSTFNLCLNHGPSMSAIANSLINPNVSTSGISCFEKTVPLIAQQLSFVAFEKTNPLFYNTTTMDGAYLPEIDMIFNLNAKNFKQYEWIHSEVSKVMALMSKWSGFSYPLTRLEIVVAPVQAGHSALGVITLPAQAIAYQKHTSTHETLIKEVIGQWMEGVVTTEHTCFEKALIAYVEWKINEELQIVKKTRKMEVSKIRPRNLNETADSVRVLRQIKSQSSNLCSPRFVEVFYTLDETYGQETVIGMIRVIFDKFAFSTATISDWASAAETATGGRPEAGALIHQWYRPSSTISRPVLRAVVSSNSVEFNQLTEETWTVPLEISGSAGTQLAVISEKKQAIPFVSSDYVVVDAGRKSHAFVVYDADTYLRLIRCFGDSRCPSKEIGGIFSDLGAALLANILPKPENQDVAKWKSVFKFMAQQNIVEGTAACCVEHAIREMRKCSYWDIQDVCTKIDFNIVLAAVA.

An N-terminal signal peptide occupies residues 1-27 (MTPPPASPSKKAKSSWLLIALIAVIIG). Residue Asn-54 is glycosylated (N-linked (GlcNAc...) asparagine). Low complexity predominate over residues 63–94 (TSKATVSTTTTQSATTPSTTTTRIEETTTTTS). Residues 63–113 (TSKATVSTTTTQSATTPSTTTTRIEETTTTTSGAFDESVKNSEASTSTIPT) form a disordered region. Residues Asn-183, Asn-341, Asn-375, and Asn-520 are each glycosylated (N-linked (GlcNAc...) asparagine).

The sequence is that of Matrix non-peptidase homolog 1 (mnp-1) from Caenorhabditis elegans.